The sequence spans 456 residues: UDP-N-acetylmuramate--L-alanine ligase (456 aa).

Residue 114 to 120 (GTHGKTT) participates in ATP binding.

It belongs to the MurCDEF family.

The protein resides in the cytoplasm. The catalysed reaction is UDP-N-acetyl-alpha-D-muramate + L-alanine + ATP = UDP-N-acetyl-alpha-D-muramoyl-L-alanine + ADP + phosphate + H(+). The protein operates within cell wall biogenesis; peptidoglycan biosynthesis. Cell wall formation. The sequence is that of UDP-N-acetylmuramate--L-alanine ligase from Porphyromonas gingivalis (strain ATCC 33277 / DSM 20709 / CIP 103683 / JCM 12257 / NCTC 11834 / 2561).